Reading from the N-terminus, the 89-residue chain is Small ribosomal subunit protein uS15 (89 aa).

This sequence belongs to the universal ribosomal protein uS15 family. In terms of assembly, part of the 30S ribosomal subunit. Forms a bridge to the 50S subunit in the 70S ribosome, contacting the 23S rRNA.

Functionally, one of the primary rRNA binding proteins, it binds directly to 16S rRNA where it helps nucleate assembly of the platform of the 30S subunit by binding and bridging several RNA helices of the 16S rRNA. In terms of biological role, forms an intersubunit bridge (bridge B4) with the 23S rRNA of the 50S subunit in the ribosome. The protein is Small ribosomal subunit protein uS15 of Syntrophobacter fumaroxidans (strain DSM 10017 / MPOB).